The following is a 280-amino-acid chain: 2-dehydro-3-deoxyphosphooctonate aldolase (280 aa).

It belongs to the KdsA family.

The protein resides in the cytoplasm. It catalyses the reaction D-arabinose 5-phosphate + phosphoenolpyruvate + H2O = 3-deoxy-alpha-D-manno-2-octulosonate-8-phosphate + phosphate. Its pathway is carbohydrate biosynthesis; 3-deoxy-D-manno-octulosonate biosynthesis; 3-deoxy-D-manno-octulosonate from D-ribulose 5-phosphate: step 2/3. The protein operates within bacterial outer membrane biogenesis; lipopolysaccharide biosynthesis. This chain is 2-dehydro-3-deoxyphosphooctonate aldolase, found in Neisseria gonorrhoeae (strain NCCP11945).